Reading from the N-terminus, the 635-residue chain is Threonine--tRNA ligase (635 aa).

Residues 1–61 (MIKITLKDGK…HKDSSLEILT (61 aa)) enclose the TGS domain. Positions 242–532 (DHRKLGKELD…LIEQYAGAFP (291 aa)) are catalytic. 3 residues coordinate Zn(2+): Cys333, His384, and His509.

This sequence belongs to the class-II aminoacyl-tRNA synthetase family. In terms of assembly, homodimer. Requires Zn(2+) as cofactor.

The protein resides in the cytoplasm. It catalyses the reaction tRNA(Thr) + L-threonine + ATP = L-threonyl-tRNA(Thr) + AMP + diphosphate + H(+). In terms of biological role, catalyzes the attachment of threonine to tRNA(Thr) in a two-step reaction: L-threonine is first activated by ATP to form Thr-AMP and then transferred to the acceptor end of tRNA(Thr). Also edits incorrectly charged L-seryl-tRNA(Thr). The chain is Threonine--tRNA ligase from Clostridium botulinum (strain Langeland / NCTC 10281 / Type F).